A 206-amino-acid chain; its full sequence is Small ribosomal subunit protein uS5 (206 aa).

Over residues 1–15 the composition is skewed to polar residues; the sequence is MTDTPTKQEIQSKND. Positions 1-50 are disordered; the sequence is MTDTPTKQEIQSKNDNVPGATPVEQKKNNRNDRKRNRRGDSKNLERDSDW. Basic and acidic residues predominate over residues 38–50; the sequence is RGDSKNLERDSDW. The S5 DRBM domain maps to 50–113; that stretch reads WQERVVQIRR…SDGKKNLVRV (64 aa).

The protein belongs to the universal ribosomal protein uS5 family. Part of the 30S ribosomal subunit. Contacts proteins S4 and S8.

With S4 and S12 plays an important role in translational accuracy. In terms of biological role, located at the back of the 30S subunit body where it stabilizes the conformation of the head with respect to the body. In Prochlorococcus marinus (strain MIT 9301), this protein is Small ribosomal subunit protein uS5.